The following is a 732-amino-acid chain: Ets DNA-binding protein pokkuri (732 aa).

The PNT domain occupies 33–117; that stretch reads SSQLAELKTQ…NVLQMLIIES (85 aa). Positions 133-295 are disordered; it reads SRYPLSPHSH…PPGTPILKDI (163 aa). The segment covering 141 to 157 has biased composition (pro residues); that stretch reads SHPPTPTWPPLNAPPEN. The span at 176 to 193 shows a compositional bias: polar residues; it reads NSVTLSPPPSVDSQASSP. Positions 205–240 are enriched in low complexity; that stretch reads GAAPGSAGGSAPAAGGATNTSNPTSSSASSTGSNGS. Positions 396–479 form a DNA-binding region, ETS; that stretch reads RLLWDFLQQL…QGERHCYQFL (84 aa). Disordered stretches follow at residues 496 to 548, 590 to 647, and 674 to 732; these read QSTP…NGPM, GPPP…TATS, and VAAS…HMQQ. Low complexity predominate over residues 506–539; the sequence is SPSMPQGSSQAPGSPAGQNWNPQQQSQQQQQSPQ. Ser-543 bears the Phosphoserine mark. The segment covering 637–647 has biased composition (polar residues); sequence LSVSSKSTATS. Residues Ser-677, Ser-682, and Ser-696 each carry the phosphoserine modification. Residues 690–709 are compositionally biased toward polar residues; that stretch reads AGASNASSSPRPMDQASEQA.

The protein belongs to the ETS family. Phosphorylated in response to MAPK signaling. May be phosphorylated by rl. Expressed in R7 and cone cells of the eye.

The protein resides in the nucleus. Functionally, ets-related protein that functions as a negative regulator of photoreceptor development acting antagonistically to pnt and the proneural signal mediated by RAS. It acts upstream of SINA to inhibit R7 development. This is Ets DNA-binding protein pokkuri (aop) from Drosophila melanogaster (Fruit fly).